The chain runs to 140 residues: Nucleoside diphosphate kinase (140 aa).

Positions 11, 59, 87, 93, 104, and 114 each coordinate ATP. Histidine 117 (pros-phosphohistidine intermediate) is an active-site residue.

Belongs to the NDK family. As to quaternary structure, homotetramer. The cofactor is Mg(2+).

The protein localises to the cytoplasm. The catalysed reaction is a 2'-deoxyribonucleoside 5'-diphosphate + ATP = a 2'-deoxyribonucleoside 5'-triphosphate + ADP. It carries out the reaction a ribonucleoside 5'-diphosphate + ATP = a ribonucleoside 5'-triphosphate + ADP. Major role in the synthesis of nucleoside triphosphates other than ATP. The ATP gamma phosphate is transferred to the NDP beta phosphate via a ping-pong mechanism, using a phosphorylated active-site intermediate. This chain is Nucleoside diphosphate kinase, found in Methylobacterium sp. (strain 4-46).